The following is a 696-amino-acid chain: Polyribonucleotide nucleotidyltransferase (696 aa).

Residues D489 and D495 each contribute to the Mg(2+) site. The KH domain occupies 556–615; that stretch reads PQYVTMKINPEKIRDVIGKGGVVIREITEATNCAIDISDDGTIKIAAHTTEEGEAAKRRI. An S1 motif domain is found at 625-693; that stretch reads GKVYEGTVVK…RQGRVRLSMK (69 aa).

The protein belongs to the polyribonucleotide nucleotidyltransferase family. In terms of assembly, component of the RNA degradosome, which is a multiprotein complex involved in RNA processing and mRNA degradation. Mg(2+) serves as cofactor.

Its subcellular location is the cytoplasm. The enzyme catalyses RNA(n+1) + phosphate = RNA(n) + a ribonucleoside 5'-diphosphate. Functionally, involved in mRNA degradation. Catalyzes the phosphorolysis of single-stranded polyribonucleotides processively in the 3'- to 5'-direction. This is Polyribonucleotide nucleotidyltransferase from Coxiella burnetii (strain CbuK_Q154) (Coxiella burnetii (strain Q154)).